Consider the following 638-residue polypeptide: Ubiquitin-associated and SH3 domain-containing protein B (638 aa).

The residue at position 9 (S9) is a Phosphoserine. T12 carries the post-translational modification Phosphothreonine. A UBA domain is found at 23 to 65 (TVKHGSALDVLLSMGFPRARAQKALASTGGRSVQAACDWLFSH). The 66-residue stretch at 243–308 (ANHETLQVIY…PENYITKADE (66 aa)) folds into the SH3 domain. Positions 369 to 638 (GPQKRCLFVC…FNWRETLLQE (270 aa)) are protein tyrosine phosphatase. R379 is a catalytic residue. The active-site Tele-phosphohistidine intermediate is the H380. H565 is a catalytic residue.

In terms of assembly, homodimer. Interacts with JAK2 (in vitro). Interacts with CBL. Part of a complex containing CBL and activated EGFR. Interacts with ubiquitin and with mono-ubiquitinated proteins. Interacts with ZAP70 (ubiquitinated form). As to expression, detected in splenic T-cells and B-cells, total spleen, skeletal muscle, heart, lung, kidney, thymus, brain and liver (at protein level). Highly expressed in brain. Detected in heart, spleen, lung, liver, kidney and testis.

Its subcellular location is the cytoplasm. It is found in the nucleus. The catalysed reaction is O-phospho-L-tyrosyl-[protein] + H2O = L-tyrosyl-[protein] + phosphate. Interferes with CBL-mediated down-regulation and degradation of receptor-type tyrosine kinases. Promotes accumulation of activated target receptors, such as T-cell receptors and EGFR, on the cell surface. Exhibits tyrosine phosphatase activity toward several substrates including EGFR, FAK, SYK, and ZAP70. Down-regulates proteins that are dually modified by both protein tyrosine phosphorylation and ubiquitination. This chain is Ubiquitin-associated and SH3 domain-containing protein B (Ubash3b), found in Mus musculus (Mouse).